Reading from the N-terminus, the 392-residue chain is S-adenosylmethionine synthase (392 aa).

E10 lines the Mg(2+) pocket. ATP is bound at residue H16. A K(+)-binding site is contributed by E44. Residues E57 and Q100 each coordinate L-methionine. ATP-binding positions include 168 to 170 (DGK), 236 to 239 (SGRF), D247, 253 to 254 (RK), A270, K274, and K278. Residue D247 participates in L-methionine binding. K278 is a binding site for L-methionine.

It belongs to the AdoMet synthase family. In terms of assembly, homotetramer. Mn(2+) is required as a cofactor. It depends on Mg(2+) as a cofactor. Requires Co(2+) as cofactor. K(+) serves as cofactor.

Its subcellular location is the cytoplasm. The catalysed reaction is L-methionine + ATP + H2O = S-adenosyl-L-methionine + phosphate + diphosphate. It participates in amino-acid biosynthesis; S-adenosyl-L-methionine biosynthesis; S-adenosyl-L-methionine from L-methionine: step 1/1. Its function is as follows. Catalyzes the formation of S-adenosylmethionine from methionine and ATP. The reaction comprises two steps that are both catalyzed by the same enzyme: formation of S-adenosylmethionine (AdoMet) and triphosphate, and subsequent hydrolysis of the triphosphate. This Phaseolus lunatus (Lima bean) protein is S-adenosylmethionine synthase (SAMS).